The following is a 2442-amino-acid chain: CREB-binding protein (2442 aa).

Disordered stretches follow at residues 1–41 and 74–179; these read MAEN…NDLP and LRGG…CMNA. Position 2 is an N-acetylalanine (Ala2). Positions 20-30 are enriched in polar residues; it reads PGFSANDSTDF. Residues 80 to 90 are compositionally biased toward low complexity; that stretch reads SSINPGIGNVS. Ser121 is subject to Phosphoserine. Residues 122–131 show a composition bias toward polar residues; the sequence is PLSQGDSSAP. Residue Ser124 is modified to Phosphoserine; by ATM. Over residues 136–150 the composition is skewed to low complexity; sequence QAASTSGPTPAASQA. The segment covering 151-172 has biased composition (polar residues); that stretch reads LNPQAQKQVGLATSSPATSQTG. The residue at position 220 (Arg220) is an Omega-N-methylarginine. Positions 227–410 are interaction with SRCAP; sequence PTPAMQGASS…GKACQVAHCA (184 aa). The disordered stretch occupies residues 266 to 290; the sequence is KMGITGNTSPFGQPFSQAGGQPMGA. Residues 270 to 284 are compositionally biased toward polar residues; that stretch reads TGNTSPFGQPFSQAG. Residues 347–433 form a TAZ-type 1 zinc finger; the sequence is DPEKRKLIQQ…RHDCPVCLPL (87 aa). The Zn(2+) site is built by His363, Cys367, Cys380, Cys385, His394, Cys398, Cys404, Cys409, His418, Cys422, Cys427, and Cys430. In terms of domain architecture, KIX spans 587-666; sequence GVRKGWHEHV…KIYKIQKELE (80 aa). An asymmetric dimethylarginine mark is found at Arg601 and Arg625. At Lys657 the chain carries N6-acetyllysine. 2 stretches are compositionally biased toward polar residues: residues 794-805 and 814-823; these read LPQNQFPSSSGA and PAQTGVSQGQ. The disordered stretch occupies residues 794–1083; it reads LPQNQFPSSS…STSPSQPRKK (290 aa). Pro residues-rich tracts occupy residues 844-860 and 876-885; these read PCPP…PPPA and GMTPPQPAAP. 2 stretches are compositionally biased toward low complexity: residues 886–929 and 937–952; these read TQPS…VTPQ and PSVA…PTPV. A compositionally biased stretch (polar residues) spans 973–988; the sequence is PTPSSVASAETNSQQP. Residue Lys998 forms a Glycyl lysine isopeptide (Lys-Gly) (interchain with G-Cter in SUMO1) linkage. The span at 1011-1021 shows a compositional bias: basic and acidic residues; sequence GESKGEPRSEM. Residue Lys1014 is modified to N6-acetyllysine. A Phosphoserine modification is found at Ser1030. Residues 1032 to 1059 are compositionally biased toward basic and acidic residues; that stretch reads VKEETDIAEQKSEPMEVDEKKPEVKVEV. Glycyl lysine isopeptide (Lys-Gly) (interchain with G-Cter in SUMO1) cross-links involve residues Lys1033 and Lys1056. The segment covering 1066–1078 has biased composition (low complexity); the sequence is SSNGTASQSTSPS. Ser1076 carries the post-translational modification Phosphoserine. The Bromo domain maps to 1085 to 1192; that stretch reads FKPEELRQAL…EVFEQEIDPV (108 aa). The segment at 1124-1170 is interaction with histone; sequence DYFDIVKNPMDLSTIKRKLDTGQYQEPWQYVDDVWLMFNNAWLYNRK. The tract at residues 1162-1180 is interaction with ASF1A; that stretch reads NNAWLYNRKTSRVYKFCSK. Position 1216 is an N6-acetyllysine (Lys1216). The region spanning 1323-1700 is the CBP/p300-type HAT domain; sequence KFSAKRLQTT…MLVELHTQGQ (378 aa). 2 positions are modified to phosphoserine; by IKKA: Ser1382 and Ser1386. The tract at residues 1433–1435 is interaction with histone; that stretch reads YLD. Acetyl-CoA contacts are provided by residues 1434 to 1436, 1446 to 1447, Ile1493, Arg1498, and Trp1502; these read LDS and RT. Residues 1460 to 1891 form an interaction with TRERF1 region; the sequence is YVKKLGYVTG…LPSPTSAPPG (432 aa). Basic and acidic residues predominate over residues 1556 to 1568; that stretch reads LEQEEEERKKEES. Positions 1556 to 1615 are disordered; the sequence is LEQEEEERKKEESTAASETTEGSQGDSKNAKKKNNKKTNKNKSSISRANKKKPSMPNVSN. N6-acetyllysine is present on residues Lys1583, Lys1591, Lys1592, Lys1595, and Lys1597. The segment covering 1585–1595 has biased composition (basic residues); sequence AKKKNNKKTNK. A ZZ-type zinc finger spans residues 1702-1750; the sequence is RFVYTCNECKHHVETRWHCTVCEDYDLCINCYNTKSHAHKMVKWGLGLD. Cys1707, Cys1710, Cys1720, Cys1723, Cys1729, Cys1732, His1738, and His1740 together coordinate Zn(2+). N6-acetyllysine is present on residues Lys1741 and Lys1744. Ser1763 carries the phosphoserine modification. A TAZ-type 2 zinc finger spans residues 1765 to 1846; that stretch reads QESRRLSIQR…KCPVPFCLNI (82 aa). Disordered regions lie at residues 1874 to 1959 and 1977 to 2028; these read TRNV…VEAA and INNS…PLPQ. Residues 1900–1912 show a composition bias toward pro residues; that stretch reads PQTPQPPAQPQPS. Residues 1925 to 1940 are compositionally biased toward polar residues; that stretch reads ARTQPPTTVSTGKPTS. Positions 1943–1954 are enriched in pro residues; that stretch reads PAPPPPAQPPPA. The span at 2018–2027 shows a compositional bias: low complexity; sequence PGQWQQAPLP. Residues Ser2063, Ser2076, and Ser2079 each carry the phosphoserine modification. 5 stretches are compositionally biased toward low complexity: residues 2112–2137, 2146–2160, 2196–2219, 2228–2263, and 2294–2305; these read QPGM…HQQP, QAGV…QQQA, QLLQ…QGSA, HGQF…SMGQ, and RILQQQQMKQQI. 2 disordered regions span residues 2112–2263 and 2294–2433; these read QPGM…SMGQ and RILQ…TTGD. Polar residues-rich tracts occupy residues 2315 to 2327 and 2334 to 2343; these read SPQQ…QPQA and QIATSLSNQV. Over residues 2349-2372 the composition is skewed to pro residues; sequence VQSPRPQSQPPHSSPSPRIQPQPS. Position 2351 is a phosphoserine (Ser2351). The span at 2411 to 2424 shows a compositional bias: polar residues; that stretch reads QLNTPSRSALSSEL.

Found in a complex containing NCOA2; NCOA3; IKKA; IKKB and IKBKG. Probably part of a complex with HIF1A and EP300. Interacts with GATA1; the interaction results in acetylation and enhancement of transcriptional activity of GATA1. Interacts with MAF and ZCCHC12. Interacts with DAXX; the interaction is dependent on CBP sumoylation and results in suppression of the transcriptional activity via recruitment of HDAC2 to DAXX. Interacts with phosphorylated CREB1. Interacts with CITED4 (C-terminal region). Interacts (via the TAZ-type 1 domain) with HIF1A. Interacts with SRCAP, CARM1, ELF3, MLLT7/FOXO4, N4BP2, NCOA1, NCOA3, NCOA6, PCAF, DDX5, DDX17, PELP1, PML, SMAD1, SMAD2, SMAD3, SPIB and TRERF1. Interacts with KLF1; the interaction results in acetylation of KLF1 and enhancement of its transcriptional activity. Interacts with MTDH. Interacts with NFATC4. Interacts with MAFG; the interaction acetylates MAFG in the basic region and stimulates NFE2 transcriptional activity through increasing its DNA-binding activity. Interacts with IRF2; the interaction acetylates IRF2 and regulates its activity on the H4 promoter. Interacts with IRF3 (when phosphorylated); forming the dsRNA-activated factor 1 (DRAF1), a complex which activates the transcription of the type I interferon genes. Interacts (via N-terminus) with SS18L1/CREST (via C-terminus). Interacts with MECOM. Interacts with CITED1 (via C-terminus). Interacts with FOXO1; the interaction acetylates FOXO1 and inhibits its transcriptional activity. Interacts with NPAS2, CLOCK and BMAL1. Interacts with ASF1A and ASF1B; this promotes histone acetylation. Interacts with acetylated TP53/p53 and with the acetylated histones H3 and H4. Interacts (via transactivation domain and C-terminus) with PCNA; the interaction occurs on chromatin in UV-irradiated damaged cells. Interacts with DHX9 (via N-terminus); this interaction mediates association with RNA polymerase II holoenzyme and stimulates CREB-dependent transcriptional activation. Interacts with SMAD4; negatively regulated by ZBTB7A. Interacts with DUX4 (via C-terminus). Forms a complex with KMT2A and CREB1. Interacts with DDX3X; this interaction may facilitate HNF4A acetylation. Interacts with MSX1; the interaction may inhibit MSX1 autoinactivation. Interacts with ACSS2. As to quaternary structure, (Microbial infection) Interacts with HTLV-1 Tax, p30II and HBZ. In terms of assembly, (Microbial infection) Interacts with human herpes virus 8/HHV-8 protein vIRF-1; this interaction inhibits CREBBP binding to IRF3. (Microbial infection) Interacts with HIV-1 Tat. In terms of processing, methylation of the KIX domain by CARM1 blocks association with CREB. This results in the blockade of CREB signaling, and in activation of apoptotic response. Phosphorylated by CHUK/IKKA at Ser-1382 and Ser-1386; these phosphorylations promote cell growth by switching the binding preference of CREBBP from TP53 to NF-kappa-B. Phosphorylated by _ at Ser-124 in response to DNA damage, promoting interaction with MRE11 and lactylation of MRE11. Post-translationally, sumoylation negatively regulates transcriptional activity via the recruitment of DAAX. In terms of processing, autoacetylation is required for binding to protein substrates, such as acetylated histones and acetylated TP53/p53. Autoacetylation is induced by glucose and fatty acids.

Its subcellular location is the cytoplasm. It is found in the nucleus. The enzyme catalyses L-lysyl-[histone] + acetyl-CoA = N(6)-acetyl-L-lysyl-[histone] + CoA + H(+). The catalysed reaction is L-lysyl-[protein] + acetyl-CoA = N(6)-acetyl-L-lysyl-[protein] + CoA + H(+). It carries out the reaction (S)-lactoyl-CoA + L-lysyl-[protein] = N(6)-[(S)-lactoyl]-L-lysyl-[protein] + CoA + H(+). In terms of biological role, acetylates histones, giving a specific tag for transcriptional activation. Mediates acetylation of histone H3 at 'Lys-18' and 'Lys-27' (H3K18ac and H3K27ac, respectively). Also acetylates non-histone proteins, like DDX21, FBL, IRF2, MAFG, NCOA3, POLR1E/PAF53 and FOXO1. Binds specifically to phosphorylated CREB and enhances its transcriptional activity toward cAMP-responsive genes. Acts as a coactivator of ALX1. Acts as a circadian transcriptional coactivator which enhances the activity of the circadian transcriptional activators: NPAS2-BMAL1 and CLOCK-BMAL1 heterodimers. Acetylates PCNA; acetylation promotes removal of chromatin-bound PCNA and its degradation during nucleotide excision repair (NER). Acetylates POLR1E/PAF53, leading to decreased association of RNA polymerase I with the rDNA promoter region and coding region. Acetylates DDX21, thereby inhibiting DDX21 helicase activity. Acetylates FBL, preventing methylation of 'Gln-105' of histone H2A (H2AQ104me). In addition to protein acetyltransferase, can use different acyl-CoA substrates, such as lactoyl-CoA, and is able to mediate protein lactylation. Catalyzes lactylation of MRE11 in response to DNA damage, thereby promoting DNA double-strand breaks (DSBs) via homologous recombination (HR). Functions as a transcriptional coactivator for SMAD4 in the TGF-beta signaling pathway. The chain is CREB-binding protein from Homo sapiens (Human).